A 154-amino-acid polypeptide reads, in one-letter code: Myoglobin (154 aa).

Residues glycine 2 to lysine 148 form the Globin domain. Histidine 65 is a binding site for nitrite. Histidine 65 is an O2 binding site. Histidine 94 contributes to the heme b binding site.

As to quaternary structure, monomeric.

It localises to the cytoplasm. Its subcellular location is the sarcoplasm. The enzyme catalyses Fe(III)-heme b-[protein] + nitric oxide + H2O = Fe(II)-heme b-[protein] + nitrite + 2 H(+). It carries out the reaction H2O2 + AH2 = A + 2 H2O. In terms of biological role, monomeric heme protein which primary function is to store oxygen and facilitate its diffusion within muscle tissues. Reversibly binds oxygen through a pentacoordinated heme iron and enables its timely and efficient release as needed during periods of heightened demand. Depending on the oxidative conditions of tissues and cells, and in addition to its ability to bind oxygen, it also has a nitrite reductase activity whereby it regulates the production of bioactive nitric oxide. Under stress conditions, like hypoxia and anoxia, it also protects cells against reactive oxygen species thanks to its pseudoperoxidase activity. The protein is Myoglobin of Dromaius novaehollandiae (Emu).